The primary structure comprises 548 residues: MLSRSAIRSASRSVVAANLVRSMNRVARPALVVAGRRFASAKAQPTEVSSILEERIRGVSEESNLNETGRVLAVGDGIARVFGLNNVQAEELVEFSSGVKGMALNLEPGQVGIVLFGSDRLVKEGEVVKRTGKIVDVGVGPELLGRVVDALGNPIDGKGPINASGRSRAQVKAPGILPRRSVHEPVQTGLKSVDALVPIGRGQRELIIGDRQTGKTAVALDTILNQKRWNNGTDESKKLYCVYVAVGQKRSTVAQLVQTLEQHDALKYSIIVAATASEAAPLQYIAPFTAAAIGEWFRDNGRHALIIYDDLSKQAVAYRQLSLLLRRPPGREAYPGDVFYLHSRLLERAAKMSEKNGGGSLTALPVIETQGGDVSAYIPTNVISITDGQIFLEAELFYKGIRPAINVGLSVSRVGSAAQVKALKQVAGSLKLFLAQYREVAAFAQFGSDLDASTKQTLARGERLTQLLKQNQYSPLAAEEQVPLIYAGVNGYLDNIDISRIAEFETKFLAYLKANHDEIVSAIREKGELSKELLATLKSATESFVATF.

209-216 (GDRQTGKT) serves as a coordination point for ATP.

The protein belongs to the ATPase alpha/beta chains family. As to quaternary structure, F-type ATPases have 2 components, CF(1) - the catalytic core - and CF(0) - the membrane proton channel. CF(1) has five subunits: alpha(3), beta(3), gamma(1), delta(1), epsilon(1). CF(0) has three main subunits: a, b and c.

Its subcellular location is the mitochondrion. It localises to the mitochondrion inner membrane. Functionally, mitochondrial membrane ATP synthase (F(1)F(0) ATP synthase or Complex V) produces ATP from ADP in the presence of a proton gradient across the membrane which is generated by electron transport complexes of the respiratory chain. F-type ATPases consist of two structural domains, F(1) - containing the extramembraneous catalytic core, and F(0) - containing the membrane proton channel, linked together by a central stalk and a peripheral stalk. During catalysis, ATP synthesis in the catalytic domain of F(1) is coupled via a rotary mechanism of the central stalk subunits to proton translocation. Subunits alpha and beta form the catalytic core in F(1). Rotation of the central stalk against the surrounding alpha(3)beta(3) subunits leads to hydrolysis of ATP in three separate catalytic sites on the beta subunits. Subunit alpha does not bear the catalytic high-affinity ATP-binding sites. The polypeptide is ATP synthase subunit alpha, mitochondrial (ATP1) (Kluyveromyces lactis (strain ATCC 8585 / CBS 2359 / DSM 70799 / NBRC 1267 / NRRL Y-1140 / WM37) (Yeast)).